The chain runs to 189 residues: ATP-dependent protease subunit HslV (189 aa).

T12 is a catalytic residue. Na(+)-binding residues include S172, C175, and T178.

It belongs to the peptidase T1B family. HslV subfamily. In terms of assembly, a double ring-shaped homohexamer of HslV is capped on each side by a ring-shaped HslU homohexamer. The assembly of the HslU/HslV complex is dependent on binding of ATP.

The protein localises to the cytoplasm. The catalysed reaction is ATP-dependent cleavage of peptide bonds with broad specificity.. With respect to regulation, allosterically activated by HslU binding. Protease subunit of a proteasome-like degradation complex believed to be a general protein degrading machinery. This Ehrlichia canis (strain Jake) protein is ATP-dependent protease subunit HslV.